The chain runs to 407 residues: Imidazolonepropionase (407 aa).

H68 and H70 together coordinate Fe(3+). Residues H68 and H70 each coordinate Zn(2+). Residues R77, Y140, and H173 each contribute to the 4-imidazolone-5-propanoate site. Residue Y140 coordinates N-formimidoyl-L-glutamate. Residue H238 participates in Fe(3+) binding. H238 is a binding site for Zn(2+). Q241 is a binding site for 4-imidazolone-5-propanoate. Residue D313 coordinates Fe(3+). D313 provides a ligand contact to Zn(2+). N-formimidoyl-L-glutamate is bound by residues N315 and G317. T318 contacts 4-imidazolone-5-propanoate.

This sequence belongs to the metallo-dependent hydrolases superfamily. HutI family. Requires Zn(2+) as cofactor. Fe(3+) serves as cofactor.

The protein resides in the cytoplasm. It carries out the reaction 4-imidazolone-5-propanoate + H2O = N-formimidoyl-L-glutamate. It participates in amino-acid degradation; L-histidine degradation into L-glutamate; N-formimidoyl-L-glutamate from L-histidine: step 3/3. Catalyzes the hydrolytic cleavage of the carbon-nitrogen bond in imidazolone-5-propanoate to yield N-formimidoyl-L-glutamate. It is the third step in the universal histidine degradation pathway. This chain is Imidazolonepropionase, found in Burkholderia pseudomallei (strain 668).